The following is a 187-amino-acid chain: Epididymal-specific lipocalin-10 (187 aa).

An N-terminal signal peptide occupies residues 1-19; it reads MRQGLLVLALVLVLVLVLA. Cysteines 90 and 163 form a disulfide. N149 carries N-linked (GlcNAc...) asparagine glycosylation. The residue at position 170 (K170) is an N6-acetyllysine.

This sequence belongs to the calycin superfamily. Lipocalin family.

Its subcellular location is the secreted. May play a role in male fertility. May act as a retinoid carrier protein within the epididymis. This chain is Epididymal-specific lipocalin-10 (LCN10), found in Homo sapiens (Human).